The sequence spans 847 residues: E4 SUMO-protein ligase PIAL1 (847 aa).

The interacting domain (IND), required for interaction with MOM1 and PIAL2 stretch occupies residues 113–271 (VNSPVTLISQ…EVVGSNSDCD (159 aa)). The SP-RING-type zinc finger occupies 268–349 (SDCDIIEGPS…LRKILEEVGR (82 aa)). 4 residues coordinate Zn(2+): cysteine 299, histidine 301, cysteine 322, and cysteine 325. A run of 7 repeats spans residues 569–591 (QRPVPSYIAHPQTFHVNYGENAD), 592–614 (QRWMPSSIAHPQTLPVNYGGNTN), 615–637 (QRPIPSSIAHPQTLPVNYRGNTD), 638–659 (HRSTPYSITHLQTLLNYGGNAD), 660–682 (QRPMPSSITNLQTLPATYGGYAH), 683–705 (QRPMSSSITHPRTSPVNYGGTPD), and 706–728 (QRPMPSSITHPQTLPVSYGGTTD). The 7 X 23 AA approximate tandem repeats stretch occupies residues 569 to 728 (QRPVPSYIAH…LPVSYGGTTD (160 aa)).

Belongs to the PIAL protein ligase family. In terms of assembly, homodimer. Interacts with MOM1 and PIAL2 to form a high molecular mass complex which mediates transcriptional gene silencing at heterochromatin regions. As to expression, expressed in leaves, stems and flowers, and, at low levels, in siliques and old leaves.

Its subcellular location is the nucleus. It functions in the pathway protein modification; protein sumoylation. Its function is as follows. Together with MOM1 and PIAL2, regulates transcriptional gene silencing (TGS) independently of changes in DNA methylation. E4-type SUMO ligase that promotes SUMO chain formation in a SCE1-dependent manner and thus contributes to a pathway for proteolytic removal of sumoylation substrates. Involved in stress responses (e.g. osmotic, salt and abscisic acid ABA) and sulfur metabolism. The chain is E4 SUMO-protein ligase PIAL1 from Arabidopsis thaliana (Mouse-ear cress).